A 315-amino-acid chain; its full sequence is Probable cell division protein WhiA (315 aa).

A DNA-binding region (H-T-H motif) is located at residues 280-313 (SLRELGKMLNPPVGKSGVNHRLRRIEKIADELKQ).

Belongs to the WhiA family.

Involved in cell division and chromosome segregation. This Clostridium botulinum (strain ATCC 19397 / Type A) protein is Probable cell division protein WhiA.